Reading from the N-terminus, the 702-residue chain is MWQINEVVLFDNDPYRILAIEDGQVVWMQISADKGVPQARAELLLMQYLDEGRLVRTDDPYVHLDLEEPSVDSVSFQKREEDYRKILPIINSKDRFDPKVRSELVEHVVQEHKVTKATVYKLLRRYWQRGQTPNALIPDYKNSGAPGERRSATGTAKIGRAREYGKGEGTKVTPEIERLFRLTIEKHLLNQKGTKTTVAYRRFVDLFAQYFPRIPQEDYPTLRQFRYFYDREYPKAQRLKSRVKAGVYKKDVRPLSSTATSQALGPGSRYEIDATIADIYLVDHHDRQKIIGRPTLYIVIDVFSRMITGFYIGFENPSYVVAMQAFVNACSDKTAICAQHDIEISSSDWPCVGLPDVLLADRGELMSHQVEALVSSFNVRVESAPPRRGDAKGIVESTFRTLQAEFKSFAPGIVEGSRIKSHGETDYRLDASLSVFEFTQIILRTILFRNNHLVMDKYDRDADFPTDLPSIPVQLWQWGMQHRTGSLRAVEQEQLRVALLPRRKVSISSFGVNLWGLYYSGSEILREGWLQRSTDIARPQHLEAAYDPVLVDTIYLFPQVGSRVFWRCNLTERSRQFKGLSFWEVWDIQAQEKHNKANAKQDELTKRRELEAFIQQTIQKANKLTPSTTEPKSTRIKQIKTNKKEAVTSERKKRAEHLKPSSSGDEAKVIPFNAVEADDQEDYSLPTYVPELFQDPPEKDES.

The interval 1–139 (MWQINEVVLF…GQTPNALIPD (139 aa)) is DNA-binding domain 1 (DBD1). A DNA-binding region (H-T-H motif) is located at residues 105-124 (VEHVVQEHKVTKATVYKLLR). A disordered region spans residues 137 to 160 (IPDYKNSGAPGERRSATGTAKIGR). Positions 140–172 (YKNSGAPGERRSATGTAKIGRAREYGKGEGTKV) are linker 1. A DNA-binding domain 2 (DBD2) region spans residues 173–233 (TPEIERLFRL…QFRYFYDREY (61 aa)). Positions 234 to 267 (PKAQRLKSRVKAGVYKKDVRPLSSTATSQALGPG) are linker 2. In terms of domain architecture, Integrase catalytic spans 262–480 (QALGPGSRYE…IPVQLWQWGM (219 aa)). The tract at residues 268 to 582 (SRYEIDATIA…RSRQFKGLSF (315 aa)) is catalytic domain (CD). A C-terminal domain region spans residues 589-702 (QAQEKHNKAN…FQDPPEKDES (114 aa)). The disordered stretch occupies residues 623 to 702 (KLTPSTTEPK…FQDPPEKDES (80 aa)).

In terms of assembly, heteromer with TnsA.

Sequence-specific, DNA-binding protein required for Tn7 transposition. Recognizes sequences necessary for recombination at both left and right ends of Tn7 and, together with TnsA, forms the transposase. TnsB executes the 3'-DNA strand breakage and joining reactions. TnsB binding introduces DNA bending. There are 3 DNA-binding sites in the left and 4 in the right end of Tn7; as TnsB levels increase more TnsB is bound, suggesting high protein levels contribute to transposon immunity. Binding of TnsB to the transposon right end represses expression of the downstream transposition genes. TnsABC + TnsD promote high-frequency insertion of Tn7 into a specific target site known as att-Tn7 whereas TnsABC + TnsE promote low-frequency insertion into many different sites. The protein is Transposon Tn7 transposition protein TnsB of Escherichia coli.